The following is a 284-amino-acid chain: Expansin-A17 (284 aa).

Residues 1–21 (MASSWNNPAIFLAAALAVATA) form the signal peptide. An Expansin-like EG45 domain is found at 71–185 (GGACGYVSND…RRVPCQRTGG (115 aa)). In terms of domain architecture, Expansin-like CBD spans 195 to 279 (YWLLLYVMNV…WWITGLCYQG (85 aa)).

Belongs to the expansin family. Expansin A subfamily. Expressed in roots.

The protein localises to the secreted. It is found in the cell wall. It localises to the membrane. May cause loosening and extension of plant cell walls by disrupting non-covalent bonding between cellulose microfibrils and matrix glucans. No enzymatic activity has been found. May be required for rapid internodal elongation in deepwater rice during submergence. The sequence is that of Expansin-A17 (EXPA17) from Oryza sativa subsp. japonica (Rice).